The chain runs to 31 residues: Jingzhaotoxin F7-15.33 (31 aa).

Disulfide bonds link Cys2–Cys16, Cys9–Cys21, and Cys15–Cys28.

It belongs to the neurotoxin 10 (Hwtx-1) family. In terms of tissue distribution, expressed by the venom gland.

The protein resides in the secreted. Probable ion channel inhibitor. The polypeptide is Jingzhaotoxin F7-15.33 (Chilobrachys guangxiensis (Chinese earth tiger tarantula)).